Consider the following 344-residue polypeptide: Late embryogenesis abundant protein 17 (344 aa).

2 disordered regions span residues 1 to 20 (MASR…RRAA) and 116 to 258 (KDYT…QGQG). Residues 3 to 52 (SRQDRREARAEADARRAAEEIARARDERVMQAEVDARSAADEIARARADR) adopt a coiled-coil conformation. Composition is skewed to basic and acidic residues over residues 116–163 (KDYT…KDAV), 172–230 (EATK…DATK), and 238–252 (DKAR…DATD).

Belongs to the LEA type 4 family. Expressed in embryos.

The protein localises to the nucleus. Functionally, involved in abiotic stress responses. May function as chaperone and contribute to prevent the formation of damaging protein aggregates. This Oryza sativa subsp. japonica (Rice) protein is Late embryogenesis abundant protein 17.